We begin with the raw amino-acid sequence, 366 residues long: UDP-N-acetylglucosamine 2-epimerase (366 aa).

Histidine 206 is a catalytic residue.

The protein belongs to the UDP-N-acetylglucosamine 2-epimerase family. In terms of assembly, homodimer.

Its subcellular location is the cytoplasm. The catalysed reaction is UDP-N-acetyl-alpha-D-glucosamine = UDP-N-acetyl-alpha-D-mannosamine. In terms of biological role, catalyzes the reversible epimerization at C-2 of UDP-N-acetylglucosamine (UDP-GlcNAc) to produce UDP-N-acetylmannosamine (UDP-ManNAc), the activated donor of ManNAc residues. In Methanococcus maripaludis (strain DSM 14266 / JCM 13030 / NBRC 101832 / S2 / LL), this protein is UDP-N-acetylglucosamine 2-epimerase (wecB).